A 137-amino-acid chain; its full sequence is Phosphoinositide-interacting protein (137 aa).

2 helical membrane passes run 56–76 (IVIM…TCLA) and 94–114 (PGFL…VPII).

As to quaternary structure, interacts with TRPV1.

Its subcellular location is the membrane. In terms of biological role, regulatory subunit of TRPV1, a molecular sensor of noxious heat and capsaicin. Positively regulates TRPV1 channel activity via phosphatidylinositol 4,5-bisphosphate (PIP2). Binds various phosphoinositide, including phosphatidylinositol 4,5-bisphosphate (PIP2), but not phosphatidylinositol (PI). The protein is Phosphoinositide-interacting protein (PIRT) of Homo sapiens (Human).